Consider the following 365-residue polypeptide: Gibberellin 20 oxidase 1-B (365 aa).

Positions glycine 199–proline 299 constitute a Fe2OG dioxygenase domain. Residues histidine 224, aspartate 226, and histidine 280 each coordinate Fe cation. The active site involves arginine 290.

Belongs to the iron/ascorbate-dependent oxidoreductase family. GA20OX subfamily. The cofactor is Fe cation. It depends on L-ascorbate as a cofactor. Not detected in nodes and the ear of the elongating stem.

It carries out the reaction gibberellin A12 + 2 2-oxoglutarate + 3 O2 + H(+) = gibberellin A9 + 2 succinate + 3 CO2 + 2 H2O. The catalysed reaction is gibberellin A53 + 2 2-oxoglutarate + 3 O2 + H(+) = gibberellin A20 + 2 succinate + 3 CO2 + 2 H2O. In terms of biological role, key oxidase enzyme in the biosynthesis of gibberellin that catalyzes the conversion of GA12 and GA53 to GA9 and GA20 respectively, via a three-step oxidation at C-20 of the GA skeleton. This chain is Gibberellin 20 oxidase 1-B (GA20ox1B), found in Triticum aestivum (Wheat).